The following is a 202-amino-acid chain: Pyridoxal 5'-phosphate synthase subunit PdxT (202 aa).

G50 to S52 provides a ligand contact to L-glutamine. The active-site Nucleophile is the C82. Residues R111 and I140 to R141 contribute to the L-glutamine site. Catalysis depends on charge relay system residues H176 and E178.

This sequence belongs to the glutaminase PdxT/SNO family. In terms of assembly, in the presence of PdxS, forms a dodecamer of heterodimers. Only shows activity in the heterodimer.

It catalyses the reaction aldehydo-D-ribose 5-phosphate + D-glyceraldehyde 3-phosphate + L-glutamine = pyridoxal 5'-phosphate + L-glutamate + phosphate + 3 H2O + H(+). It carries out the reaction L-glutamine + H2O = L-glutamate + NH4(+). It functions in the pathway cofactor biosynthesis; pyridoxal 5'-phosphate biosynthesis. Functionally, catalyzes the hydrolysis of glutamine to glutamate and ammonia as part of the biosynthesis of pyridoxal 5'-phosphate. The resulting ammonia molecule is channeled to the active site of PdxS. The protein is Pyridoxal 5'-phosphate synthase subunit PdxT of Streptomyces coelicolor (strain ATCC BAA-471 / A3(2) / M145).